The chain runs to 151 residues: UPF0756 membrane protein GTNG_2661 (151 aa).

The next 4 helical transmembrane spans lie at 5-25 (VLFL…SLII), 53-73 (WGVT…EIGF), 86-106 (WIAL…VMLL), and 116-136 (LVLG…GPLI).

This sequence belongs to the UPF0756 family.

It localises to the cell membrane. The polypeptide is UPF0756 membrane protein GTNG_2661 (Geobacillus thermodenitrificans (strain NG80-2)).